A 266-amino-acid polypeptide reads, in one-letter code: Metallo-beta-lactamase domain-containing protein 1 (266 aa).

Residues 48 to 71 (LPQTRGPASSHRESPRGSGGAEAA) form a disordered region. Residues H114, H116, D118, H119, H169, D192, and H231 each coordinate Zn(2+). Positions 229 to 266 (PGHGPPFRVLREASQPETEGGGNSQQEPVVGDEEPALH) are disordered.

The protein belongs to the metallo-beta-lactamase superfamily. Glyoxalase II family. In terms of assembly, homodimer. Requires Zn(2+) as cofactor.

The protein localises to the cytoplasm. It is found in the cytosol. It localises to the nucleus. The enzyme catalyses a ribonucleotidyl-ribonucleotide-RNA + H2O = a 3'-end ribonucleotide-RNA + a 5'-end 5'-phospho-ribonucleoside-RNA + H(+). In terms of biological role, endoribonuclease that catalyzes the hydrolysis of histone-coding pre-mRNA 3'-end. Involved in histone pre-mRNA processing during the S-phase of the cell cycle, which is required for entering/progressing through S-phase. Cleaves histone pre-mRNA at a major and a minor cleavage site after the 5'-ACCCA-3' and the 5'-ACCCACA-3' sequence, respectively, and located downstream of the stem-loop. May require the presence of the HDE element located at the histone pre-RNA 3'-end to avoid non-specific cleavage. This chain is Metallo-beta-lactamase domain-containing protein 1, found in Homo sapiens (Human).